The chain runs to 257 residues: UPF0246 protein BPP3440 (257 aa).

This sequence belongs to the UPF0246 family.

This Bordetella parapertussis (strain 12822 / ATCC BAA-587 / NCTC 13253) protein is UPF0246 protein BPP3440.